Here is a 366-residue protein sequence, read N- to C-terminus: Autoinducer 2-binding periplasmic protein LuxP (366 aa).

The N-terminal stretch at 1–13 is a signal peptide; sequence MKKILLTCLLASA.

It belongs to the bacterial solute-binding protein 2 family.

The protein resides in the periplasm. Its function is as follows. Binds to an autoinducer molecule. This complex then interacts with the LuxQ sensor protein. The sequence is that of Autoinducer 2-binding periplasmic protein LuxP (luxP) from Vibrio vulnificus (strain CMCP6).